The primary structure comprises 230 residues: Zein-alpha 19A2 (230 aa).

Positions 1 to 18 (KIFCFLMLLGLSASAATA) are cleaved as a signal peptide.

It belongs to the zein family.

Its function is as follows. Zeins are major seed storage proteins. The polypeptide is Zein-alpha 19A2 (Zea mays (Maize)).